A 2372-amino-acid chain; its full sequence is NBAS subunit of NRZ tethering complex (2372 aa).

WD repeat units follow at residues 119–158 (DPNP…LFII) and 304–343 (GEQD…LRGS). Residues 447 to 468 (LESSVKGEEDDGDDDSDSDEEA) are disordered. The span at 454 to 467 (EEDDGDDDSDSDEE) shows a compositional bias: acidic residues. Residues 629–668 (YEDFLSMEEELEQRKERESKKRQELLKKVDFSKLTLEQKE) adopt a coiled-coil conformation.

It is found in the endoplasmic reticulum. Its function is as follows. Involved in Golgi-to-endoplasmic reticulum (ER) retrograde transport; the function is proposed to depend on its association in the NRZ complex which is believed to play a role in SNARE assembly at the ER. Required for normal embryonic development. May play a role in the nonsense-mediated decay pathway of mRNAs containing premature stop codons. The chain is NBAS subunit of NRZ tethering complex from Danio rerio (Zebrafish).